Reading from the N-terminus, the 170-residue chain is Bacilliredoxin SRU_1493 (170 aa).

A disordered region spans residues 140 to 170; the sequence is CGDEEPPADAPSRPDPSSSGEGLPSTFQSIT.

The protein belongs to the bacilliredoxin family.

The sequence is that of Bacilliredoxin SRU_1493 from Salinibacter ruber (strain DSM 13855 / M31).